Reading from the N-terminus, the 24-residue chain is Conotoxin PIVE (24 aa).

Cystine bridges form between Cys2–Cys10, Cys3–Cys15, and Cys13–Cys19. A Lysine amide modification is found at Lys24.

The protein belongs to the conotoxin A superfamily. As to expression, expressed by the venom duct.

Its subcellular location is the secreted. Its function is as follows. Probable neurotoxin with ion channel inhibitor activity. In vivo, elicits dose-dependently excitatory activity upon injection into fish. Its action is slowly reversible. This is Conotoxin PIVE from Conus purpurascens (Purple cone).